A 235-amino-acid polypeptide reads, in one-letter code: Probable ribonuclease P protein subunit 3 (235 aa).

The protein belongs to the eukaryotic/archaeal RNase P protein component 3 family.

The protein localises to the nucleus. The catalysed reaction is Endonucleolytic cleavage of RNA, removing 5'-extranucleotides from tRNA precursor.. Part of ribonuclease P, a protein complex that generates mature tRNA molecules by cleaving their 5'-ends. The protein is Probable ribonuclease P protein subunit 3 of Schizosaccharomyces pombe (strain 972 / ATCC 24843) (Fission yeast).